Consider the following 434-residue polypeptide: Methylenetetrahydrofolate--tRNA-(uracil-5-)-methyltransferase TrmFO (434 aa).

9-14 (GAGLAG) lines the FAD pocket.

It belongs to the MnmG family. TrmFO subfamily. FAD serves as cofactor.

The protein localises to the cytoplasm. It catalyses the reaction uridine(54) in tRNA + (6R)-5,10-methylene-5,6,7,8-tetrahydrofolate + NADH + H(+) = 5-methyluridine(54) in tRNA + (6S)-5,6,7,8-tetrahydrofolate + NAD(+). It carries out the reaction uridine(54) in tRNA + (6R)-5,10-methylene-5,6,7,8-tetrahydrofolate + NADPH + H(+) = 5-methyluridine(54) in tRNA + (6S)-5,6,7,8-tetrahydrofolate + NADP(+). Catalyzes the folate-dependent formation of 5-methyl-uridine at position 54 (M-5-U54) in all tRNAs. In Fusobacterium nucleatum subsp. nucleatum (strain ATCC 25586 / DSM 15643 / BCRC 10681 / CIP 101130 / JCM 8532 / KCTC 2640 / LMG 13131 / VPI 4355), this protein is Methylenetetrahydrofolate--tRNA-(uracil-5-)-methyltransferase TrmFO.